The chain runs to 98 residues: uncharacterized protein (98 aa).

Residues 37 to 91 (LITSRQQLGISQKQLETLSGVKQPMIARIEKGQTNPQLETLLKLLAPLGKTLSIV) enclose the HTH cro/C1-type domain. The segment at residues 48 to 67 (QKQLETLSGVKQPMIARIEK) is a DNA-binding region (H-T-H motif).

This is an uncharacterized protein from Haemophilus influenzae (strain ATCC 51907 / DSM 11121 / KW20 / Rd).